The following is a 444-amino-acid chain: Methylenetetrahydrofolate--tRNA-(uracil-5-)-methyltransferase TrmFO (444 aa).

10–15 contacts FAD; that stretch reads GAGLAG.

The protein belongs to the MnmG family. TrmFO subfamily. Requires FAD as cofactor.

It is found in the cytoplasm. The catalysed reaction is uridine(54) in tRNA + (6R)-5,10-methylene-5,6,7,8-tetrahydrofolate + NADH + H(+) = 5-methyluridine(54) in tRNA + (6S)-5,6,7,8-tetrahydrofolate + NAD(+). It carries out the reaction uridine(54) in tRNA + (6R)-5,10-methylene-5,6,7,8-tetrahydrofolate + NADPH + H(+) = 5-methyluridine(54) in tRNA + (6S)-5,6,7,8-tetrahydrofolate + NADP(+). Catalyzes the folate-dependent formation of 5-methyl-uridine at position 54 (M-5-U54) in all tRNAs. The protein is Methylenetetrahydrofolate--tRNA-(uracil-5-)-methyltransferase TrmFO of Streptococcus gordonii (strain Challis / ATCC 35105 / BCRC 15272 / CH1 / DL1 / V288).